The chain runs to 103 residues: Large ribosomal subunit protein bL21 (103 aa).

This sequence belongs to the bacterial ribosomal protein bL21 family. As to quaternary structure, part of the 50S ribosomal subunit. Contacts protein L20.

Its function is as follows. This protein binds to 23S rRNA in the presence of protein L20. The protein is Large ribosomal subunit protein bL21 of Chloroflexus aurantiacus (strain ATCC 29364 / DSM 637 / Y-400-fl).